Consider the following 614-residue polypeptide: Probable LRR receptor-like serine/threonine-protein kinase At5g63710 (614 aa).

The first 50 residues, 1 to 50 (MAHSGNGESFHDPLRGFIQRNCFRWNNQKLILQCFMALAFVGITSSTTQP), serve as a signal peptide directing secretion. The Extracellular segment spans residues 51–224 (DIEGGALLQL…VTSSKKKLRD (174 aa)). N-linked (GlcNAc...) asparagine glycosylation is found at Asn65, Asn125, Asn146, and Asn175. 3 LRR repeats span residues 115 to 139 (LKFL…LGNM), 141 to 163 (NLQT…WSQL), and 164 to 187 (SNLK…FFSI). The chain crosses the membrane as a helical span at residues 225-245 (ITLTASCVASIILFLGAMVMY). Topologically, residues 246 to 613 (HHHRVRRTKY…DQESIRLSTA (368 aa)) are cytoplasmic. Residue Thr286 is modified to Phosphothreonine. Residues 289–573 (FNESNLIGQG…GTGGLAEKWT (285 aa)) form the Protein kinase domain. 295 to 303 (IGQGGFGKV) contributes to the ATP binding site. At Thr312 the chain carries Phosphothreonine. Residue Lys317 coordinates ATP. Ser370 is subject to Phosphoserine. Position 389 is a phosphothreonine (Thr389). The active-site Proton acceptor is the Asp416. Phosphothreonine occurs at positions 449, 450, and 455. At Tyr463 the chain carries Phosphotyrosine. A Phosphothreonine modification is found at Thr466. Residue Ser470 is modified to Phosphoserine. Phosphothreonine is present on Thr545.

The protein belongs to the protein kinase superfamily. Ser/Thr protein kinase family.

The protein resides in the cell membrane. It carries out the reaction L-seryl-[protein] + ATP = O-phospho-L-seryl-[protein] + ADP + H(+). The enzyme catalyses L-threonyl-[protein] + ATP = O-phospho-L-threonyl-[protein] + ADP + H(+). The protein is Probable LRR receptor-like serine/threonine-protein kinase At5g63710 of Arabidopsis thaliana (Mouse-ear cress).